A 907-amino-acid polypeptide reads, in one-letter code: Protein translocase subunit SecA (907 aa).

ATP contacts are provided by residues glutamine 87, 105–109 (GEGKT), and aspartate 512. Zn(2+) contacts are provided by cysteine 891, cysteine 893, cysteine 902, and histidine 903.

The protein belongs to the SecA family. Monomer and homodimer. Part of the essential Sec protein translocation apparatus which comprises SecA, SecYEG and auxiliary proteins SecDF-YajC and YidC. Requires Zn(2+) as cofactor.

The protein localises to the cell inner membrane. The protein resides in the cytoplasm. It catalyses the reaction ATP + H2O + cellular proteinSide 1 = ADP + phosphate + cellular proteinSide 2.. In terms of biological role, part of the Sec protein translocase complex. Interacts with the SecYEG preprotein conducting channel. Has a central role in coupling the hydrolysis of ATP to the transfer of proteins into and across the cell membrane, serving both as a receptor for the preprotein-SecB complex and as an ATP-driven molecular motor driving the stepwise translocation of polypeptide chains across the membrane. This is Protein translocase subunit SecA from Tolumonas auensis (strain DSM 9187 / NBRC 110442 / TA 4).